A 211-amino-acid chain; its full sequence is tRNA (guanine-N(7)-)-methyltransferase (211 aa).

Glu-44, Asp-69, Asp-96, and Asp-118 together coordinate S-adenosyl-L-methionine. Residue Asp-118 is part of the active site. Lys-122 contacts substrate. Positions 124 to 129 are interaction with RNA; that stretch reads KHEKRR. Residues Asp-154 and 191-194 contribute to the substrate site; that span reads TEYE.

The protein belongs to the class I-like SAM-binding methyltransferase superfamily. TrmB family.

It catalyses the reaction guanosine(46) in tRNA + S-adenosyl-L-methionine = N(7)-methylguanosine(46) in tRNA + S-adenosyl-L-homocysteine. Its pathway is tRNA modification; N(7)-methylguanine-tRNA biosynthesis. In terms of biological role, catalyzes the formation of N(7)-methylguanine at position 46 (m7G46) in tRNA. In Streptococcus agalactiae serotype Ia (strain ATCC 27591 / A909 / CDC SS700), this protein is tRNA (guanine-N(7)-)-methyltransferase.